The sequence spans 500 residues: Probable malate:quinone oxidoreductase (500 aa).

Belongs to the MQO family. It depends on FAD as a cofactor.

It catalyses the reaction (S)-malate + a quinone = a quinol + oxaloacetate. It functions in the pathway carbohydrate metabolism; tricarboxylic acid cycle; oxaloacetate from (S)-malate (quinone route): step 1/1. This chain is Probable malate:quinone oxidoreductase, found in Bacillus cereus (strain ATCC 10987 / NRS 248).